The following is a 290-amino-acid chain: N-acetylmannosamine kinase (290 aa).

Residues 6–13 and 132–139 contribute to the ATP site; these read ALDIGGTK and GVGGGIIL. The Zn(2+) site is built by His156, Cys166, Cys168, and Cys173.

The protein belongs to the ROK (NagC/XylR) family. NanK subfamily. As to quaternary structure, homodimer.

The enzyme catalyses an N-acyl-D-mannosamine + ATP = an N-acyl-D-mannosamine 6-phosphate + ADP + H(+). Its pathway is amino-sugar metabolism; N-acetylneuraminate degradation; D-fructose 6-phosphate from N-acetylneuraminate: step 2/5. Catalyzes the phosphorylation of N-acetylmannosamine (ManNAc) to ManNAc-6-P. This chain is N-acetylmannosamine kinase, found in Yersinia pseudotuberculosis serotype O:1b (strain IP 31758).